Reading from the N-terminus, the 510-residue chain is NAD(P)H-quinone oxidoreductase subunit 2 B, chloroplastic (510 aa).

13 helical membrane passes run 24–44 (LLLFHGSFIFPECILIFGLIL), 57–77 (IPWLYFISSTSLVMSITALLF), 99–119 (IFQFLILLCSTLCIPLSVEYI), 124–144 (MAITEFLLFVLTATLGGMFLC), 150–170 (ITIFVAPECFSLCSYLLSGYT), 183–203 (YLLMGGASSSILVHGFSWLYG), 229–249 (ISIALIFITVGIGFKLSPAPF), 295–315 (WHLLLEILAILSMILGNLIAI), 323–343 (MLAYSSIGQIGYVIIGIIVGD), 354–374 (YMLFYISMNLGTFARIVLFGL), 395–415 (ALSSALCLLSLGGLPPLAGFF), 418–438 (LHLFWCGWQAGLYFLVSIGLL), and 484–504 (MIVCVIASTIPGISMNPIIAI).

It belongs to the complex I subunit 2 family. In terms of assembly, NDH is composed of at least 16 different subunits, 5 of which are encoded in the nucleus.

Its subcellular location is the plastid. It localises to the chloroplast thylakoid membrane. It carries out the reaction a plastoquinone + NADH + (n+1) H(+)(in) = a plastoquinol + NAD(+) + n H(+)(out). The enzyme catalyses a plastoquinone + NADPH + (n+1) H(+)(in) = a plastoquinol + NADP(+) + n H(+)(out). Its function is as follows. NDH shuttles electrons from NAD(P)H:plastoquinone, via FMN and iron-sulfur (Fe-S) centers, to quinones in the photosynthetic chain and possibly in a chloroplast respiratory chain. The immediate electron acceptor for the enzyme in this species is believed to be plastoquinone. Couples the redox reaction to proton translocation, and thus conserves the redox energy in a proton gradient. The protein is NAD(P)H-quinone oxidoreductase subunit 2 B, chloroplastic of Drimys granadensis.